A 379-amino-acid chain; its full sequence is Putative thylakoid lumen peptidyl-prolyl cis-trans isomerase sll0408 (379 aa).

A signal peptide spans 1–33 (MQIIKTPLGIITRRGLQLSLLSLLLTMLSLTWA). One can recognise a PPIase cyclophilin-type domain in the interval 190–378 (GRATVEMTTN…SGADNLVNGN (189 aa)).

The protein localises to the cellular thylakoid lumen. It catalyses the reaction [protein]-peptidylproline (omega=180) = [protein]-peptidylproline (omega=0). In terms of biological role, PPIases accelerate the folding of proteins. It catalyzes the cis-trans isomerization of proline imidic peptide bonds in oligopeptides. Required for the assembly and stabilization of PSII. The polypeptide is Putative thylakoid lumen peptidyl-prolyl cis-trans isomerase sll0408 (Synechocystis sp. (strain ATCC 27184 / PCC 6803 / Kazusa)).